Consider the following 174-residue polypeptide: Large ribosomal subunit protein uL10 (174 aa).

Belongs to the universal ribosomal protein uL10 family. In terms of assembly, part of the ribosomal stalk of the 50S ribosomal subunit. The N-terminus interacts with L11 and the large rRNA to form the base of the stalk. The C-terminus forms an elongated spine to which L12 dimers bind in a sequential fashion forming a multimeric L10(L12)X complex.

Its function is as follows. Forms part of the ribosomal stalk, playing a central role in the interaction of the ribosome with GTP-bound translation factors. This Syntrophus aciditrophicus (strain SB) protein is Large ribosomal subunit protein uL10.